A 235-amino-acid chain; its full sequence is tRNA pseudouridine synthase B (235 aa).

The active-site Nucleophile is the Asp45.

Belongs to the pseudouridine synthase TruB family. Type 1 subfamily.

The enzyme catalyses uridine(55) in tRNA = pseudouridine(55) in tRNA. Functionally, responsible for synthesis of pseudouridine from uracil-55 in the psi GC loop of transfer RNAs. In Chlamydia pneumoniae (Chlamydophila pneumoniae), this protein is tRNA pseudouridine synthase B.